The sequence spans 344 residues: Dihydroorotate dehydrogenase (quinone) (344 aa).

Residues 62–66 and threonine 86 each bind FMN; that span reads AGLDK. Substrate is bound at residue lysine 66. 111 to 115 is a binding site for substrate; sequence NRMGF. 2 residues coordinate FMN: asparagine 139 and asparagine 172. Residue asparagine 172 participates in substrate binding. The active-site Nucleophile is serine 175. Asparagine 177 serves as a coordination point for substrate. Residues lysine 217 and threonine 245 each contribute to the FMN site. 246–247 contacts substrate; sequence NT. Residues glycine 268, glycine 297, and 318–319 each bind FMN; that span reads YS.

Belongs to the dihydroorotate dehydrogenase family. Type 2 subfamily. As to quaternary structure, monomer. FMN is required as a cofactor.

It is found in the cell membrane. The enzyme catalyses (S)-dihydroorotate + a quinone = orotate + a quinol. It functions in the pathway pyrimidine metabolism; UMP biosynthesis via de novo pathway; orotate from (S)-dihydroorotate (quinone route): step 1/1. Functionally, catalyzes the conversion of dihydroorotate to orotate with quinone as electron acceptor. In Chromobacterium violaceum (strain ATCC 12472 / DSM 30191 / JCM 1249 / CCUG 213 / NBRC 12614 / NCIMB 9131 / NCTC 9757 / MK), this protein is Dihydroorotate dehydrogenase (quinone).